Consider the following 668-residue polypeptide: Penicillin-binding protein 3 (668 aa).

A helical membrane pass occupies residues 7–23 (LLVFLCVGLIGLIGCSK). S410 acts as the Acyl-ester intermediate in catalysis.

It belongs to the transpeptidase family.

Its subcellular location is the cell membrane. It localises to the forespore inner membrane. The protein localises to the forespore outer membrane. The protein resides in the membrane raft. The enzyme catalyses Preferential cleavage: (Ac)2-L-Lys-D-Ala-|-D-Ala. Also transpeptidation of peptidyl-alanyl moieties that are N-acyl substituents of D-alanine.. Its pathway is cell wall biogenesis; peptidoglycan biosynthesis. Penicillin-binding proteins (PBPs) function in the late steps of murein biosynthesis. Probably required for both cortical and vegetative peptidoglycan synthesis. Although not usually required for cell division, in the absence of PBP 2B (pbpB) it becomes essential. Confers resistance to oxacillin and cephalexin. In Bacillus subtilis (strain 168), this protein is Penicillin-binding protein 3.